A 507-amino-acid polypeptide reads, in one-letter code: Histidine ammonia-lyase (507 aa).

The 5-imidazolinone (Ala-Gly) cross-link spans 141–143 (ASG). 2,3-didehydroalanine (Ser) is present on Ser142.

It belongs to the PAL/histidase family. In terms of processing, contains an active site 4-methylidene-imidazol-5-one (MIO), which is formed autocatalytically by cyclization and dehydration of residues Ala-Ser-Gly.

It localises to the cytoplasm. The enzyme catalyses L-histidine = trans-urocanate + NH4(+). It functions in the pathway amino-acid degradation; L-histidine degradation into L-glutamate; N-formimidoyl-L-glutamate from L-histidine: step 1/3. The chain is Histidine ammonia-lyase from Burkholderia pseudomallei (strain 1106a).